A 128-amino-acid chain; its full sequence is Diacylglycerol kinase (128 aa).

Glu34 serves as a coordination point for a divalent metal cation. Helical transmembrane passes span 35–55 (SAFR…SYLT) and 58–78 (FLEW…ELIN). Glu75 (proton acceptor) is an active-site residue. Glu82 provides a ligand contact to a divalent metal cation. A helical transmembrane segment spans residues 108–128 (LIGLIFWAFIWGRYLLTLYFN).

The protein belongs to the bacterial diacylglycerol kinase family. Requires Mg(2+) as cofactor.

It localises to the cell inner membrane. The enzyme catalyses a 1,2-diacyl-sn-glycerol + ATP = a 1,2-diacyl-sn-glycero-3-phosphate + ADP + H(+). Catalyzes the ATP-dependent phosphorylation of sn-l,2-diacylglycerol (DAG) to phosphatidic acid. Involved in the recycling of diacylglycerol produced as a by-product during membrane-derived oligosaccharide (MDO) biosynthesis. This Helicobacter pylori (strain J99 / ATCC 700824) (Campylobacter pylori J99) protein is Diacylglycerol kinase (dgkA).